We begin with the raw amino-acid sequence, 317 residues long: MTTALDQLKQYTTVVADTGDFQQLAQYKPQDATTNPSLILKAVQKDAYKPILEKTVRDHRDEPADFIIDRLLIAFGTEILKLIPGRVSTEVDARLSFDTQRSIDKGRELIKLYEDAGIGRERILIKLASTWEGIRAAEVLQKEGIKCNMTLLFSLVQAAASAEAGAQLISPFVGRIYDWYKKQAGADWDEAKNGGANDPGVQSVRRIYTYYKTFGYNTEVMGASFRTTSQITELAGCDLLTISPDLLQKLQDSNDTVERKLSPDALHDKPTERVAIDEASFRFQLNDEAMATEKLSEGIRVFAADAVKLEKLIDSLR.

K126 functions as the Schiff-base intermediate with substrate in the catalytic mechanism.

Belongs to the transaldolase family. Type 1 subfamily. Homodimer.

The protein localises to the cytoplasm. It catalyses the reaction D-sedoheptulose 7-phosphate + D-glyceraldehyde 3-phosphate = D-erythrose 4-phosphate + beta-D-fructose 6-phosphate. It participates in carbohydrate degradation; pentose phosphate pathway; D-glyceraldehyde 3-phosphate and beta-D-fructose 6-phosphate from D-ribose 5-phosphate and D-xylulose 5-phosphate (non-oxidative stage): step 2/3. In terms of biological role, transaldolase is important for the balance of metabolites in the pentose-phosphate pathway. In Burkholderia ambifaria (strain MC40-6), this protein is Transaldolase.